We begin with the raw amino-acid sequence, 479 residues long: 5-hydroxytryptamine receptor 2B (479 aa).

At 1–55 the chain is on the extracellular side; it reads MASSYKMSEQSTISEHILQKTCDHLILTDRSGLKAESAAEEMKQTAENQGNTVHW. The helical transmembrane segment at 56–78 threads the bilayer; that stretch reads AALLIFAVIIPTIGGNILVILAV. Over 79–89 the chain is Cytoplasmic; the sequence is SLEKRLQYATN. Residues 90-112 traverse the membrane as a helical segment; the sequence is YFLMSLAVADLLVGLFVMPIALL. Topologically, residues 113 to 128 are extracellular; it reads TIMFEATWPLPLALCP. A disulfide bond links Cys127 and Cys206. The helical transmembrane segment at 129–150 threads the bilayer; that stretch reads AWLFLDVLFSTASIMHLCAISL. The ergotamine site is built by Asp134 and Thr139. The DRY motif; important for ligand-induced conformation changes motif lies at 151-153; that stretch reads DRY. At 151-170 the chain is on the cytoplasmic side; sequence DRYIAIKKPIQANQCNSRTT. A helical transmembrane segment spans residues 171–191; sequence AFVKITVVWLISIGIAIPVPI. Over 192–215 the chain is Extracellular; the sequence is KGIEADVVNAHNITCELTKDRFGS. Residue Asn203 is glycosylated (N-linked (GlcNAc...) asparagine). Leu208 provides a ligand contact to ergotamine. The [DE]RFG motif; may stabilize a conformation that preferentially activates signaling via beta-arrestin family members signature appears at 211–214; sequence DRFG. A helical transmembrane segment spans residues 216-238; that stretch reads FMLFGSLAAFFAPLTIMIVTYFL. Residues 239 to 323 are Cytoplasmic-facing; it reads TIHALRKKAY…TISNEQRASK (85 aa). A helical transmembrane segment spans residues 324-344; the sequence is VLGIVFLFFLLMWCPFFITNV. At 345-359 the chain is on the extracellular side; the sequence is TLALCDSCNQTTLKT. A disulfide bridge links Cys349 with Cys352. N-linked (GlcNAc...) asparagine glycosylation occurs at Asn353. A helical transmembrane segment spans residues 360 to 381; that stretch reads LLQIFVWVGYVSSGVNPLIYTL. An NPxxY motif; important for ligand-induced conformation changes and signaling motif is present at residues 375-379; that stretch reads NPLIY. Residues 382–479 lie on the Cytoplasmic side of the membrane; it reads FNKTFREAFG…DKVEDQVSYI (98 aa). Cys396 is lipidated: S-palmitoyl cysteine. The PDZ-binding motif lies at 477-479; it reads SYI.

This sequence belongs to the G-protein coupled receptor 1 family. Interacts (via C-terminus) with MPDZ. In terms of tissue distribution, stomach fundus.

The protein resides in the cell membrane. The protein localises to the synapse. It localises to the synaptosome. In terms of biological role, G-protein coupled receptor for 5-hydroxytryptamine (serotonin). Also functions as a receptor for various ergot alkaloid derivatives and psychoactive substances. Ligand binding causes a conformation change that triggers signaling via guanine nucleotide-binding proteins (G proteins) and modulates the activity of downstream effectors. HTR2B is coupled to G(q)/G(11) G alpha proteins and activates phospholipase C-beta, releasing diacylglycerol (DAG) and inositol 1,4,5-trisphosphate (IP3) second messengers that modulate the activity of phosphatidylinositol 3-kinase and promote the release of Ca(2+) ions from intracellular stores, respectively. Beta-arrestin family members inhibit signaling via G proteins and mediate activation of alternative signaling pathways. Plays a role in the regulation of dopamine and 5-hydroxytryptamine release, 5-hydroxytryptamine uptake and in the regulation of extracellular dopamine and 5-hydroxytryptamine levels, and thereby affects neural activity. May play a role in the perception of pain. Plays a role in the regulation of behavior, including impulsive behavior. Required for normal proliferation of embryonic cardiac myocytes and normal heart development. Protects cardiomyocytes against apoptosis. Plays a role in the adaptation of pulmonary arteries to chronic hypoxia. Plays a role in vasoconstriction. Required for normal osteoblast function and proliferation, and for maintaining normal bone density. Required for normal proliferation of the interstitial cells of Cajal in the intestine. This chain is 5-hydroxytryptamine receptor 2B (Htr2b), found in Rattus norvegicus (Rat).